Reading from the N-terminus, the 141-residue chain is Nucleoside diphosphate kinase (141 aa).

ATP-binding residues include lysine 11, phenylalanine 59, arginine 87, threonine 93, arginine 104, and asparagine 114. The Pros-phosphohistidine intermediate role is filled by histidine 117.

Belongs to the NDK family. As to quaternary structure, homotetramer. Mg(2+) serves as cofactor.

It is found in the cytoplasm. It carries out the reaction a 2'-deoxyribonucleoside 5'-diphosphate + ATP = a 2'-deoxyribonucleoside 5'-triphosphate + ADP. The catalysed reaction is a ribonucleoside 5'-diphosphate + ATP = a ribonucleoside 5'-triphosphate + ADP. Its function is as follows. Major role in the synthesis of nucleoside triphosphates other than ATP. The ATP gamma phosphate is transferred to the NDP beta phosphate via a ping-pong mechanism, using a phosphorylated active-site intermediate. This is Nucleoside diphosphate kinase from Pseudomonas putida (strain ATCC 47054 / DSM 6125 / CFBP 8728 / NCIMB 11950 / KT2440).